We begin with the raw amino-acid sequence, 116 residues long: UPF0482 protein PC1_2049 (116 aa).

An N-terminal signal peptide occupies residues 1–31; that stretch reads MNHYSFSSLIRAFIPLSLVIVSAAWQPAALA.

The protein belongs to the UPF0482 family.

The chain is UPF0482 protein PC1_2049 from Pectobacterium carotovorum subsp. carotovorum (strain PC1).